The sequence spans 135 residues: C-type lectin Cal (135 aa).

Cystine bridges form between Cys3–Cys14, Cys31–Cys131, Cys38–Cys133, and Cys106–Cys123. Residues 10–132 form the C-type lectin domain; sequence MNGLCYKIFN…CESKDAFLCQ (123 aa). Residues Gln96, Asp98, Glu104, Asn119, and Asp120 each coordinate Ca(2+). Positions 96–98 match the Galactose-binding motif; sequence QPD.

This sequence belongs to the true venom lectin family. As to quaternary structure, homodecamer of disulfide-linked dimers arranged in two pseudo-5-fold symmetric pentamers. As to expression, expressed by the venom gland.

The protein resides in the secreted. Functionally, galactose-binding protein which recognizes specific carbohydrate structures and agglutinates a variety of animal cells by binding to cell-surface glycoproteins and glycolipids. Calcium-dependent lectin. Shows high hemagglutinating activity (MHC=10 ng/ml). The chain is C-type lectin Cal from Crotalus atrox (Western diamondback rattlesnake).